The sequence spans 779 residues: Anion/proton exchange transporter GEF1 (779 aa).

Residues 1-75 (MPTTYVPINQ…REVIWDRAKT (75 aa)) are Cytoplasmic-facing. Residues 76–96 (FITLSSTAIVIGCIAGFLQVF) traverse the membrane as a helical segment. The Lumenal segment spans residues 97 to 154 (TETLVNWKTGHCQRNWLLNKSFCCNGVVNEVTSTSNLLLKRQEFECEAQGLWIAWKGH). The helical transmembrane segment at 155–175 (VSPFIIFMLLSVLFALISTLL) threads the bilayer. The Cytoplasmic portion of the chain corresponds to 176-177 (VK). A helical membrane pass occupies residues 178-198 (YVAPMATGSGISEIKVWVSGF). At 199–203 (EYNKE) the chain is on the lumenal side. The helical transmembrane segment at 204–224 (FLGFLTLVIKSVALPLAISSG) threads the bilayer. Topologically, residues 225-264 (LSVGKEGPSVHYATCCGYLLTKWLLRDTLTYSSQYEYITA) are cytoplasmic. Residues 265–285 (ASGAGVAVAFGAPIGGVLFGL) traverse the membrane as a helical segment. Topologically, residues 286 to 296 (EEIASANRFNS) are lumenal. A helical transmembrane segment spans residues 297–319 (STLWKSYYVALVAITTLKYIDPF). Residues 320–336 (RNGRVILFNVTYDRDWK) are Cytoplasmic-facing. Residues 337–357 (VQEIPIFIALGIFGGLYGKYI) form a helical membrane-spanning segment. Residues 358–369 (SKWNINFIHFRK) lie on the Lumenal side of the membrane. A helical transmembrane segment spans residues 370 to 390 (MYLSSWPVQEVLFLATLTALI). Over 391 to 436 (SYFNEFLKLDMTESMGILFHECVKNDNTSTFSHRLCQLDENTHAFE) the chain is Cytoplasmic. A helical transmembrane segment spans residues 437 to 457 (FLKIFTSLCFATVIRALLVVV). The Lumenal segment spans residues 458 to 465 (SYGARVPA). A helical membrane pass occupies residues 466 to 486 (GIFVPSMAVGATFGRAVSLLV). Residues 487–500 (ERFISGPSVITPGA) are Cytoplasmic-facing. Residues 501–523 (YAFLGAAATLSGITNLTLTVVVI) form a helical membrane-spanning segment. Over 524–529 (MFELTG) the chain is Lumenal. The chain crosses the membrane as a helical span at residues 530–552 (AFMYIIPLMIVVAITRIILSTSG). At 553–779 (ISGGIADQMI…FTTNRNGNVI (227 aa)) the chain is on the cytoplasmic side. CBS domains lie at 591–659 (MSSK…VNST) and 688–744 (MNES…YREV).

This sequence belongs to the chloride channel (TC 2.A.49) family. In terms of assembly, homodimer. Interacts with GET3. Post-translationally, proteolytically processed in the secretory pathway by protease KEX2 within the first extracellular loop. However, both the N- and C-terminal products of the cleavage reaction are required for assembly of a functional channel.

It is found in the golgi apparatus membrane. It localises to the endosome membrane. Its subcellular location is the prevacuolar compartment membrane. Its function is as follows. Anion/proton exchange transporter involved in iron and copper cation homeostasis. Involved in intracellular iron metabolism during growth on fermentable and non fermentable carbon sources. Required for proper copper-loading and maturation of multicopper oxidase FET3. Important for adjusting intracellular compartment pH to more alkaline pH under iron limitation. May also transport chloride ions through the plasma membrane. This is Anion/proton exchange transporter GEF1 (GEF1) from Saccharomyces cerevisiae (strain ATCC 204508 / S288c) (Baker's yeast).